The chain runs to 370 residues: Histidinol-phosphate aminotransferase 1 (370 aa).

Lys229 carries the post-translational modification N6-(pyridoxal phosphate)lysine.

The protein belongs to the class-II pyridoxal-phosphate-dependent aminotransferase family. Histidinol-phosphate aminotransferase subfamily. Homodimer. Pyridoxal 5'-phosphate is required as a cofactor.

It carries out the reaction L-histidinol phosphate + 2-oxoglutarate = 3-(imidazol-4-yl)-2-oxopropyl phosphate + L-glutamate. It functions in the pathway amino-acid biosynthesis; L-histidine biosynthesis; L-histidine from 5-phospho-alpha-D-ribose 1-diphosphate: step 7/9. This chain is Histidinol-phosphate aminotransferase 1, found in Nitrosococcus oceani (strain ATCC 19707 / BCRC 17464 / JCM 30415 / NCIMB 11848 / C-107).